A 183-amino-acid chain; its full sequence is Large ribosomal subunit protein eL18 (183 aa).

The tract at residues 151 to 183 (HFGPAPGAPRSHTKPYVRSKGHEQAKPSRRSNV) is disordered.

Belongs to the eukaryotic ribosomal protein eL18 family.

The protein localises to the cytoplasm. The sequence is that of Large ribosomal subunit protein eL18 (RpL18) from Plutella xylostella (Diamondback moth).